Here is a 277-residue protein sequence, read N- to C-terminus: Release factor glutamine methyltransferase (277 aa).

Residues 117 to 121 (GTGTG), aspartate 140, tryptophan 168, and asparagine 183 contribute to the S-adenosyl-L-methionine site. Residue 183-186 (NPPY) participates in substrate binding.

It belongs to the protein N5-glutamine methyltransferase family. PrmC subfamily.

It catalyses the reaction L-glutaminyl-[peptide chain release factor] + S-adenosyl-L-methionine = N(5)-methyl-L-glutaminyl-[peptide chain release factor] + S-adenosyl-L-homocysteine + H(+). Its function is as follows. Methylates the class 1 translation termination release factors RF1/PrfA and RF2/PrfB on the glutamine residue of the universally conserved GGQ motif. The polypeptide is Release factor glutamine methyltransferase (Salmonella typhimurium (strain LT2 / SGSC1412 / ATCC 700720)).